The following is a 114-amino-acid chain: Hemerythrin subunit 1 (114 aa).

Fe cation-binding residues include His26, His55, Glu59, His74, His78, His102, and Asp107.

The protein belongs to the hemerythrin family.

Functionally, hemerythrin is a respiratory protein in blood cells of certain marine worms. The oxygen-binding site in each chain contains two iron atoms. This chain is Hemerythrin subunit 1, found in Golfingia vulgaris (Marine worm).